The chain runs to 443 residues: Signal recognition particle 54 kDa protein (443 aa).

Residues 107-114, 189-193, and 247-250 contribute to the GTP site; these read GVQGSGKT, DTAGR, and TKLD.

It belongs to the GTP-binding SRP family. SRP54 subfamily. Part of the signal recognition particle protein translocation system, which is composed of SRP and FtsY. Archaeal SRP consists of a 7S RNA molecule of 300 nucleotides and two protein subunits: SRP54 and SRP19.

The protein resides in the cytoplasm. It carries out the reaction GTP + H2O = GDP + phosphate + H(+). Involved in targeting and insertion of nascent membrane proteins into the cytoplasmic membrane. Binds to the hydrophobic signal sequence of the ribosome-nascent chain (RNC) as it emerges from the ribosomes. The SRP-RNC complex is then targeted to the cytoplasmic membrane where it interacts with the SRP receptor FtsY. This chain is Signal recognition particle 54 kDa protein, found in Pyrococcus abyssi (strain GE5 / Orsay).